The chain runs to 582 residues: uncharacterized protein (582 aa).

A helical transmembrane segment spans residues 20–40; sequence GFWALGLFGAAINAFSAVLIV.

It is found in the membrane. This is an uncharacterized protein from Mycoplasma pneumoniae (strain ATCC 29342 / M129 / Subtype 1) (Mycoplasmoides pneumoniae).